Consider the following 347-residue polypeptide: S-adenosylmethionine:tRNA ribosyltransferase-isomerase (347 aa).

The protein belongs to the QueA family. As to quaternary structure, monomer.

It is found in the cytoplasm. It catalyses the reaction 7-aminomethyl-7-carbaguanosine(34) in tRNA + S-adenosyl-L-methionine = epoxyqueuosine(34) in tRNA + adenine + L-methionine + 2 H(+). It participates in tRNA modification; tRNA-queuosine biosynthesis. Functionally, transfers and isomerizes the ribose moiety from AdoMet to the 7-aminomethyl group of 7-deazaguanine (preQ1-tRNA) to give epoxyqueuosine (oQ-tRNA). This chain is S-adenosylmethionine:tRNA ribosyltransferase-isomerase, found in Halalkalibacterium halodurans (strain ATCC BAA-125 / DSM 18197 / FERM 7344 / JCM 9153 / C-125) (Bacillus halodurans).